A 92-amino-acid chain; its full sequence is Small ribosomal subunit protein bS20 (92 aa).

Positions 1–23 (MANSPSAKKRAKQAEKRRSHNAS) are disordered. The segment covering 7-20 (AKKRAKQAEKRRSH) has biased composition (basic residues).

The protein belongs to the bacterial ribosomal protein bS20 family.

In terms of biological role, binds directly to 16S ribosomal RNA. This is Small ribosomal subunit protein bS20 from Ectopseudomonas mendocina (strain ymp) (Pseudomonas mendocina).